We begin with the raw amino-acid sequence, 123 residues long: Large ribosomal subunit protein bL20 (123 aa).

It belongs to the bacterial ribosomal protein bL20 family.

Functionally, binds directly to 23S ribosomal RNA and is necessary for the in vitro assembly process of the 50S ribosomal subunit. It is not involved in the protein synthesizing functions of that subunit. This Chlamydia muridarum (strain MoPn / Nigg) protein is Large ribosomal subunit protein bL20 (rplT).